We begin with the raw amino-acid sequence, 261 residues long: Ribonuclease HII (261 aa).

The RNase H type-2 domain occupies 71 to 259 (KYIAGVDEVG…VKESKLHFDS (189 aa)). A divalent metal cation is bound by residues aspartate 77, glutamate 78, and aspartate 169.

Belongs to the RNase HII family. It depends on Mn(2+) as a cofactor. The cofactor is Mg(2+).

The protein resides in the cytoplasm. The catalysed reaction is Endonucleolytic cleavage to 5'-phosphomonoester.. Its function is as follows. Endonuclease that specifically degrades the RNA of RNA-DNA hybrids. The sequence is that of Ribonuclease HII from Listeria monocytogenes serovar 1/2a (strain ATCC BAA-679 / EGD-e).